The chain runs to 258 residues: 5'-nucleotidase SurE (258 aa).

The a divalent metal cation site is built by aspartate 13, aspartate 14, serine 44, and asparagine 92. The interval 237–258 is disordered; it reads SPLTAPHSTEHHDALDGIATEF.

Belongs to the SurE nucleotidase family. A divalent metal cation is required as a cofactor.

It localises to the cytoplasm. It carries out the reaction a ribonucleoside 5'-phosphate + H2O = a ribonucleoside + phosphate. Its function is as follows. Nucleotidase that shows phosphatase activity on nucleoside 5'-monophosphates. The protein is 5'-nucleotidase SurE of Halobacterium salinarum (strain ATCC 29341 / DSM 671 / R1).